Reading from the N-terminus, the 698-residue chain is Elongation factor G (698 aa).

In terms of domain architecture, tr-type G spans 8 to 290; it reads ERYRNIGIAA…AVIEFLPAPN (283 aa). Residues 17 to 24, 88 to 92, and 142 to 145 contribute to the GTP site; these read AHIDAGKT, DTPGH, and NKMD.

It belongs to the TRAFAC class translation factor GTPase superfamily. Classic translation factor GTPase family. EF-G/EF-2 subfamily.

It localises to the cytoplasm. Its function is as follows. Catalyzes the GTP-dependent ribosomal translocation step during translation elongation. During this step, the ribosome changes from the pre-translocational (PRE) to the post-translocational (POST) state as the newly formed A-site-bound peptidyl-tRNA and P-site-bound deacylated tRNA move to the P and E sites, respectively. Catalyzes the coordinated movement of the two tRNA molecules, the mRNA and conformational changes in the ribosome. This Halorhodospira halophila (strain DSM 244 / SL1) (Ectothiorhodospira halophila (strain DSM 244 / SL1)) protein is Elongation factor G.